Here is a 422-residue protein sequence, read N- to C-terminus: 5-methylthioadenosine/S-adenosylhomocysteine deaminase 1 (422 aa).

Residues histidine 56 and histidine 58 each coordinate Zn(2+). Positions 85 and 174 each coordinate substrate. Residue histidine 201 participates in Zn(2+) binding. The substrate site is built by glutamate 204 and aspartate 290. Aspartate 290 is a Zn(2+) binding site.

The protein belongs to the metallo-dependent hydrolases superfamily. MTA/SAH deaminase family. Zn(2+) serves as cofactor.

It catalyses the reaction S-adenosyl-L-homocysteine + H2O + H(+) = S-inosyl-L-homocysteine + NH4(+). The catalysed reaction is S-methyl-5'-thioadenosine + H2O + H(+) = S-methyl-5'-thioinosine + NH4(+). Its function is as follows. Catalyzes the deamination of 5-methylthioadenosine and S-adenosyl-L-homocysteine into 5-methylthioinosine and S-inosyl-L-homocysteine, respectively. Is also able to deaminate adenosine. The chain is 5-methylthioadenosine/S-adenosylhomocysteine deaminase 1 from Archaeoglobus fulgidus (strain ATCC 49558 / DSM 4304 / JCM 9628 / NBRC 100126 / VC-16).